Consider the following 240-residue polypeptide: Serine protease SplB (240 aa).

Residues 1-36 form the signal peptide; that stretch reads MNKNVVIKSLAALTILTSVTGIGITLVEEVQQTAKA. Active-site charge relay system residues include histidine 75, aspartate 113, and serine 193.

Belongs to the peptidase S1B family.

Its subcellular location is the secreted. Serine protease that cleaves specifically after the sequence Trp-Glu-Leu-Gln. The chain is Serine protease SplB (splB) from Staphylococcus aureus (strain MW2).